The sequence spans 475 residues: Ribulose bisphosphate carboxylase large chain (475 aa).

The propeptide occupies 1 to 2 (MS). Residue P3 is modified to N-acetylproline. The residue at position 14 (K14) is an N6,N6,N6-trimethyllysine. Substrate contacts are provided by N123 and T173. K175 (proton acceptor) is an active-site residue. K177 lines the substrate pocket. Mg(2+)-binding residues include K201, D203, and E204. K201 is subject to N6-carboxylysine. H294 acts as the Proton acceptor in catalysis. The substrate site is built by R295, H327, and S379.

Belongs to the RuBisCO large chain family. Type I subfamily. In terms of assembly, heterohexadecamer of 8 large chains and 8 small chains; disulfide-linked. The disulfide link is formed within the large subunit homodimers. Mg(2+) serves as cofactor. The disulfide bond which can form in the large chain dimeric partners within the hexadecamer appears to be associated with oxidative stress and protein turnover.

The protein localises to the plastid. It is found in the chloroplast. It catalyses the reaction 2 (2R)-3-phosphoglycerate + 2 H(+) = D-ribulose 1,5-bisphosphate + CO2 + H2O. The enzyme catalyses D-ribulose 1,5-bisphosphate + O2 = 2-phosphoglycolate + (2R)-3-phosphoglycerate + 2 H(+). RuBisCO catalyzes two reactions: the carboxylation of D-ribulose 1,5-bisphosphate, the primary event in carbon dioxide fixation, as well as the oxidative fragmentation of the pentose substrate in the photorespiration process. Both reactions occur simultaneously and in competition at the same active site. The chain is Ribulose bisphosphate carboxylase large chain from Adiantum capillus-veneris (Maidenhair fern).